The sequence spans 483 residues: Histone acetyltransferase esa1 (483 aa).

In terms of domain architecture, Tudor-knot spans Gln-10–Leu-53. A compositionally biased stretch (basic and acidic residues) spans Val-57–Lys-69. The disordered stretch occupies residues Val-57 to Ser-127. One can recognise an MYST-type HAT domain in the interval His-195 to Pro-471. The C2HC MYST-type; degenerate zinc finger occupies Ile-228–Leu-253. The short motif at Arg-278–Tyr-299 is the ESA1-RPD3 motif element. Position 295 is an N6-acetyllysine; by autocatalysis (Lys-295). Acetyl-CoA-binding positions include Ala-336–Thr-340 and Gln-345–Arg-351. The Proton donor/acceptor role is filled by Glu-371. Ser-375 contacts acetyl-CoA.

This sequence belongs to the MYST (SAS/MOZ) family. Component of the NuA4 histone acetyltransferase complex. Autoacetylation at Lys-295 is required for proper function.

It localises to the nucleus. It is found in the chromosome. The catalysed reaction is L-lysyl-[histone] + acetyl-CoA = N(6)-acetyl-L-lysyl-[histone] + CoA + H(+). It carries out the reaction L-lysyl-[protein] + acetyl-CoA = N(6)-acetyl-L-lysyl-[protein] + CoA + H(+). The enzyme catalyses 2-hydroxyisobutanoyl-CoA + L-lysyl-[protein] = N(6)-(2-hydroxyisobutanoyl)-L-lysyl-[protein] + CoA + H(+). It catalyses the reaction (2E)-butenoyl-CoA + L-lysyl-[protein] = N(6)-(2E)-butenoyl-L-lysyl-[protein] + CoA + H(+). Catalytic component of the NuA4 histone acetyltransferase (HAT) complex which is involved in epigenetic transcriptional activation of selected genes principally by acetylation of nucleosomal histones H4, H3, H2B, H2A and H2A variant H2A.Z. Acetylates histone H4 to form H4K5ac, H4K8ac, H4K12ac and H4K16ac, histone H3 to form H3K14ac, and histone H2A to form H2AK4ac and H2AK7ac. The NuA4 complex is involved in the DNA damage response and is required for chromosome segregation. The NuA4 complex plays a direct role in repair of DNA double-strand breaks (DSBs) through homologous recombination. Recruitment to promoters depends on H3K4me. Also acetylates non-histone proteins. In addition to protein acetyltransferase, can use different acyl-CoA substrates, such as 2-hydroxyisobutanoyl-CoA (2-hydroxyisobutyryl-CoA) or (2E)-butenoyl-CoA (crotonyl-CoA), and is able to mediate protein 2-hydroxyisobutyrylation and crotonylation, respectively. The chain is Histone acetyltransferase esa1 (esa1) from Aspergillus fumigatus (strain ATCC MYA-4609 / CBS 101355 / FGSC A1100 / Af293) (Neosartorya fumigata).